The primary structure comprises 234 residues: AGEDHGRGPYVQADLAYAYEHITHDYPEQTGTKKDKISTVSDYFRNVRTHSIHPRVSVGYDFGGWRIAADYARYRKWNDDKYSVDIKELENKNQNKRDLKTENQENGTFHAVSSLGLSAVYDFKLNDKFKPYIGARVAYGHVRHSIDSTKKTTKFLTSSYGGLNPTVYTEENTQNAHHQSNSIRRVGLGVIAGVGFDITPKLTLDTGYRYHYWGRLENTRFKTHEASLGVRYRF.

Ala1 is a signal peptide.

The protein belongs to the opacity porin family.

Its subcellular location is the cell outer membrane. Functionally, implicated in a number of adherence functions. OPA proteins are implicated in pathogenesis and are subject to phase variation. This chain is Opacity protein opA56 (opaF), found in Neisseria gonorrhoeae.